Here is a 787-residue protein sequence, read N- to C-terminus: Integrin beta-3 (787 aa).

Positions 1–25 are cleaved as a signal peptide; it reads MRAQWPGQLWAALLALGALAGVVVG. Topologically, residues 26–717 are extracellular; the sequence is ESNICTTRGV…EEPECPKGPD (692 aa). Positions 29–75 constitute a PSI domain; sequence ICTTRGVNSCQQCLAVSPVCAWCSDETLSQGSPRCNLKENLLKDNCA. Disulfide bonds link Cys-30–Cys-48, Cys-38–Cys-460, Cys-41–Cys-63, Cys-51–Cys-74, Cys-202–Cys-209, Cys-257–Cys-298, Cys-399–Cys-411, Cys-431–Cys-458, Cys-462–Cys-482, Cys-473–Cys-485, Cys-487–Cys-496, Cys-498–Cys-528, Cys-511–Cys-526, Cys-520–Cys-531, Cys-533–Cys-546, Cys-548–Cys-569, Cys-553–Cys-567, Cys-561–Cys-572, and Cys-574–Cys-583. In terms of domain architecture, VWFA spans 134-376; that stretch reads DYPVDIYYLM…QLIVDAYGKI (243 aa). Mg(2+) contacts are provided by Ser-146 and Ser-148. The Ca(2+) site is built by Ser-148, Asp-151, Asp-152, and Asp-183. The tract at residues 202-209 is CX3CL1-binding; the sequence is CYNMKNAC. The interval 202–209 is involved in CX3CL1-, NRG1-, FGF1- and IGF1-binding; it reads CYNMKNAC. Ca(2+) is bound by residues Asn-240, Asp-242, Pro-244, Glu-245, and Asp-276. A Mg(2+)-binding site is contributed by Glu-245. A CX3CL1-binding region spans residues 292-312; the sequence is LPNDGHCHIGTDNHYSASTTM. N-linked (GlcNAc...) asparagine glycosylation is found at Asn-345 and Asn-396. 4 I-EGF domains span residues 462–497, 498–547, 548–584, and 585–624; these read CQAF…SMCE, CSEE…KYCE, CDDF…YYCN, and CTTR…DTCE. N-linked (GlcNAc...) asparagine glycosylation occurs at Asn-477. An N-linked (GlcNAc...) asparagine glycan is attached at Asn-584. Cystine bridges form between Cys-585–Cys-608, Cys-592–Cys-606, Cys-600–Cys-611, Cys-613–Cys-623, Cys-626–Cys-629, Cys-633–Cys-680, Cys-639–Cys-660, Cys-642–Cys-656, and Cys-688–Cys-712. N-linked (GlcNAc...) asparagine glycosylation occurs at Asn-679. The chain crosses the membrane as a helical span at residues 718–740; sequence ILVVLLSVMGAILLIGLATLLIW. Residues 741–787 are Cytoplasmic-facing; sequence KLLITIHDRKEFAKFEEERARAKWDTANNPLYKEATSTFTNITYRGT. Position 766 is a phosphothreonine (Thr-766). Tyr-772 carries the post-translational modification Phosphotyrosine. Positions 776–782 match the LIR motif; it reads TSTFTNI. Residue Thr-778 is modified to Phosphothreonine. Residue Tyr-784 is modified to Phosphotyrosine.

Belongs to the integrin beta chain family. As to quaternary structure, heterodimer of an alpha and a beta subunit. Beta-3 (ITGB3) associates with either alpha-IIB (ITGA2B) or alpha-V (ITGAV). Interacts with FLNB and COMP. Interacts with PDIA6 following platelet stimulation. Interacts with SYK; upon activation by ITGB3 promotes platelet adhesion. Interacts with MYO10. Interacts with DAB2. Interacts with FERMT2. Integrin ITGAV:ITGB3 interacts with FBLN5 (via N-terminus). Interacts with EMP2; regulates the levels of the heterodimer ITGA5:ITGB3 integrin expression on the plasma membrane. ITGAV:ITGB3 interacts with CCN3. ITGAV:ITGB3 and ITGA2B:ITGB3 interact with SELP (via C-type lectin domain); the interaction mediates cell-cell interaction and adhesion. ITGAV:ITGB3 interacts with AGRA2. ITGAV:ITGB3 is found in a ternary complex with CX3CR1 and CX3CL1. ITGAV:ITGB3 is found in a ternary complex with NRG1 and ERBB3. ITGAV:ITGB3 is found in a ternary complex with FGF1 and FGFR1. ITGAV:ITGB3 interacts with FGF2; it is likely that FGF2 can simultaneously bind ITGAV:ITGB3 and FGF receptors. ITGAV:ITGB3 binds to IL1B. ITGAV:ITGB3 is found in a ternary complex with IGF1 and IGF1R. ITGAV:ITGB3 interacts with IGF2. ITGAV:ITGB3 interacts with FBN1. ITGAV:ITGB3 interacts with CD9, CD81 and CD151 (via second extracellular domain). Interacts (via the allosteric site (site 2)) with CXCL12 in a CXCR4-independent manner. Interacts with MXRA8/DICAM; the interaction inhibits ITGAV:ITGB3 heterodimer formation. ITGAV:ITGB3 interacts with PTN. Forms a complex with PTPRZ1 and PTN that stimulates endothelial cell migration through ITGB3 Tyr-772 phosphorylation. ITGAV:ITGB3 interacts with SLC6A4. Interacts with SLC6A4 (via C-terminus); this interaction regulates SLC6A4 trafficking. ITGA2B:ITGB3 interacts with PPIA/CYPA; the interaction is ROS and PPIase activity-dependent and is increased in the presence of thrombin. Interacts with tensin TNS3; TNS3 also interacts with PEAK1, thus acting as an adapter molecule to bridge the association of PEAK1 with ITGB3. Interacts with TM4SF19. In terms of processing, phosphorylated on tyrosine residues in response to thrombin-induced platelet aggregation. Probably involved in outside-in signaling.

The protein localises to the cell membrane. Its subcellular location is the cell projection. It localises to the lamellipodium membrane. It is found in the cell junction. The protein resides in the focal adhesion. The protein localises to the postsynaptic cell membrane. Its subcellular location is the synapse. Functionally, integrin alpha-V/beta-3 (ITGAV:ITGB3) is a receptor for cytotactin, fibronectin, laminin, matrix metalloproteinase-2, osteopontin, osteomodulin, prothrombin, thrombospondin, vitronectin and von Willebrand factor. Integrin alpha-IIB/beta-3 (ITGA2B:ITGB3) is a receptor for fibronectin, fibrinogen, plasminogen, prothrombin, thrombospondin and vitronectin. Integrins alpha-IIB/beta-3 and alpha-V/beta-3 recognize the sequence R-G-D in a wide array of ligands. Integrin alpha-IIB/beta-3 recognizes the sequence H-H-L-G-G-G-A-K-Q-A-G-D-V in fibrinogen gamma chain. Following activation integrin alpha-IIB/beta-3 brings about platelet/platelet interaction through binding of soluble fibrinogen. This step leads to rapid platelet aggregation which physically plugs ruptured endothelial surfaces. Fibrinogen binding enhances SELP expression in activated platelets. ITGAV:ITGB3 binds to fractalkine (CX3CL1) and acts as its coreceptor in CX3CR1-dependent fractalkine signaling. ITGAV:ITGB3 binds to NRG1 (via EGF domain) and this binding is essential for NRG1-ERBB signaling. ITGAV:ITGB3 binds to FGF1 and this binding is essential for FGF1 signaling. ITGAV:ITGB3 binds to FGF2 and this binding is essential for FGF2 signaling. ITGAV:ITGB3 binds to IGF1 and this binding is essential for IGF1 signaling. ITGAV:ITGB3 binds to IGF2 and this binding is essential for IGF2 signaling. ITGAV:ITGB3 binds to IL1B and this binding is essential for IL1B signaling. ITGAV:ITGB3 binds to PLA2G2A via a site (site 2) which is distinct from the classical ligand-binding site (site 1) and this induces integrin conformational changes and enhanced ligand binding to site 1. ITGAV:ITGB3 acts as a receptor for fibrillin-1 (FBN1) and mediates R-G-D-dependent cell adhesion to FBN1. ITGAV:ITGB3 binds to the Lilrb4a/Gp49b receptor and enhances the Lilrb4a-mediated inhibition of mast cell activation. ITGAV:ITGB3 also suppresses marginal zone B cell antibody production through its interaction with Lilrb4a. In brain, plays a role in synaptic transmission and plasticity. Involved in the regulation of the serotonin neurotransmission, is required to localize to specific compartments within the synapse the serotonin receptor SLC6A4 and for an appropriate reuptake of serotonin. Controls excitatory synaptic strength by regulating GRIA2-containing AMPAR endocytosis, which affects AMPAR abundance and composition. ITGAV:ITGB3 act as a receptor for CD40LG. ITGAV:ITGB3 acts as a receptor for IBSP and promotes cell adhesion and migration to IBSP. This Mus musculus (Mouse) protein is Integrin beta-3.